The sequence spans 579 residues: uncharacterized protein (579 aa).

3 consecutive transmembrane segments (helical) span residues 173–193, 196–216, and 218–238; these read IAMG…GGLA, FVAA…MIGA, and YLGT…GFGA.

This sequence belongs to the TMCO4 family.

Its subcellular location is the cytoplasm. It localises to the nucleus membrane. This is an uncharacterized protein from Schizosaccharomyces pombe (strain 972 / ATCC 24843) (Fission yeast).